Here is a 171-residue protein sequence, read N- to C-terminus: Adenine phosphoribosyltransferase (171 aa).

Belongs to the purine/pyrimidine phosphoribosyltransferase family. As to quaternary structure, homodimer.

Its subcellular location is the cytoplasm. The enzyme catalyses AMP + diphosphate = 5-phospho-alpha-D-ribose 1-diphosphate + adenine. Its pathway is purine metabolism; AMP biosynthesis via salvage pathway; AMP from adenine: step 1/1. Functionally, catalyzes a salvage reaction resulting in the formation of AMP, that is energically less costly than de novo synthesis. This chain is Adenine phosphoribosyltransferase, found in Solidesulfovibrio magneticus (strain ATCC 700980 / DSM 13731 / RS-1) (Desulfovibrio magneticus).